A 285-amino-acid polypeptide reads, in one-letter code: Bifunctional protein FolD (285 aa).

NADP(+) is bound by residues 165-167 (GRS) and Ser190.

This sequence belongs to the tetrahydrofolate dehydrogenase/cyclohydrolase family. Homodimer.

The catalysed reaction is (6R)-5,10-methylene-5,6,7,8-tetrahydrofolate + NADP(+) = (6R)-5,10-methenyltetrahydrofolate + NADPH. It catalyses the reaction (6R)-5,10-methenyltetrahydrofolate + H2O = (6R)-10-formyltetrahydrofolate + H(+). Its pathway is one-carbon metabolism; tetrahydrofolate interconversion. Functionally, catalyzes the oxidation of 5,10-methylenetetrahydrofolate to 5,10-methenyltetrahydrofolate and then the hydrolysis of 5,10-methenyltetrahydrofolate to 10-formyltetrahydrofolate. The polypeptide is Bifunctional protein FolD (Staphylococcus carnosus (strain TM300)).